A 372-amino-acid chain; its full sequence is 3-dehydroquinate synthase (372 aa).

NAD(+)-binding positions include 116–120 (GVVGD), 140–141 (TT), Lys153, Lys162, and 180–183 (TLNT). Positions 195, 260, and 277 each coordinate Zn(2+).

It belongs to the sugar phosphate cyclases superfamily. Dehydroquinate synthase family. The cofactor is Co(2+). Zn(2+) is required as a cofactor. Requires NAD(+) as cofactor.

The protein resides in the cytoplasm. The enzyme catalyses 7-phospho-2-dehydro-3-deoxy-D-arabino-heptonate = 3-dehydroquinate + phosphate. It participates in metabolic intermediate biosynthesis; chorismate biosynthesis; chorismate from D-erythrose 4-phosphate and phosphoenolpyruvate: step 2/7. In terms of biological role, catalyzes the conversion of 3-deoxy-D-arabino-heptulosonate 7-phosphate (DAHP) to dehydroquinate (DHQ). This is 3-dehydroquinate synthase from Prochlorococcus marinus (strain MIT 9303).